Here is a 69-residue protein sequence, read N- to C-terminus: U5-agatoxin-Ao1a (69 aa).

The signal sequence occupies residues 1-20; it reads MRTIISLLLLSAMVFAVIEA. Positions 21 to 34 are excised as a propeptide; sequence ISLEEGLQLFEGER. Cystine bridges form between Cys36–Cys52 and Cys43–Cys57.

The protein belongs to the neurotoxin 01 (U2-agtx) family. In terms of processing, does not contain a cysteine at position 61 which disrupts the cysteine framework. In terms of tissue distribution, expressed by the venom gland.

The protein resides in the secreted. The polypeptide is U5-agatoxin-Ao1a (Agelena orientalis (Funnel-web spider)).